We begin with the raw amino-acid sequence, 698 residues long: DNA ligase (698 aa).

NAD(+)-binding positions include 47–51 (DAQYD), 96–97 (SL), and glutamate 128. Lysine 130 (N6-AMP-lysine intermediate) is an active-site residue. Positions 151, 186, 303, and 327 each coordinate NAD(+). Zn(2+)-binding residues include cysteine 422, cysteine 425, cysteine 440, and cysteine 446. The region spanning 620 to 698 (GDNLLLSNQT…EEEWIKMVNE (79 aa)) is the BRCT domain.

The protein belongs to the NAD-dependent DNA ligase family. LigA subfamily. It depends on Mg(2+) as a cofactor. Requires Mn(2+) as cofactor.

It catalyses the reaction NAD(+) + (deoxyribonucleotide)n-3'-hydroxyl + 5'-phospho-(deoxyribonucleotide)m = (deoxyribonucleotide)n+m + AMP + beta-nicotinamide D-nucleotide.. Its function is as follows. DNA ligase that catalyzes the formation of phosphodiester linkages between 5'-phosphoryl and 3'-hydroxyl groups in double-stranded DNA using NAD as a coenzyme and as the energy source for the reaction. It is essential for DNA replication and repair of damaged DNA. The protein is DNA ligase of Orientia tsutsugamushi (strain Boryong) (Rickettsia tsutsugamushi).